Reading from the N-terminus, the 110-residue chain is Large ribosomal subunit protein uL22 (110 aa).

This sequence belongs to the universal ribosomal protein uL22 family. As to quaternary structure, part of the 50S ribosomal subunit.

In terms of biological role, this protein binds specifically to 23S rRNA; its binding is stimulated by other ribosomal proteins, e.g. L4, L17, and L20. It is important during the early stages of 50S assembly. It makes multiple contacts with different domains of the 23S rRNA in the assembled 50S subunit and ribosome. Functionally, the globular domain of the protein is located near the polypeptide exit tunnel on the outside of the subunit, while an extended beta-hairpin is found that lines the wall of the exit tunnel in the center of the 70S ribosome. The sequence is that of Large ribosomal subunit protein uL22 from Haemophilus ducreyi (strain 35000HP / ATCC 700724).